The primary structure comprises 318 residues: DNA repair nuclease/redox regulator APEX1 (318 aa).

The segment at 1–59 (MPKRGKKGAVVEDAEEPKTEPEAKKSKAGAKKNEKEAVGEGAVLYEDPPDQKTSPSGKS) is disordered. A necessary for interaction with YBX1, binding to RNA, association together with NPM1 to rRNA, endoribonuclease activity on abasic RNA and localization in the nucleoli region spans residues 2 to 33 (PKRGKKGAVVEDAEEPKTEPEAKKSKAGAKKN). N6-acetyllysine; by EP300 is present on residues Lys-6 and Lys-7. Positions 8 to 13 (GAVVED) match the Nuclear localization signal (NLS) motif. Residues 16-38 (EPKTEPEAKKSKAGAKKNEKEAV) are compositionally biased toward basic and acidic residues. Positions 23–33 (AKKSKAGAKKN) are necessary for interaction with NPM1 and for efficient rRNA binding. An N6-acetyllysine mark is found at Lys-27, Lys-31, Lys-32, and Lys-35. Residue Ser-54 is modified to Phosphoserine. Positions 64–80 (ICSWNVDGLRAWIKKKG) match the Nuclear export signal (NES) motif. S-nitrosocysteine; alternate is present on Cys-65. A disulfide bridge connects residues Cys-65 and Cys-93. Residue Asp-70 coordinates Mg(2+). S-nitrosocysteine; alternate is present on Cys-93. A Mg(2+)-binding site is contributed by Glu-96. Tyr-171 is an active-site residue. Lys-197 is subject to N6-acetyllysine. 2 residues coordinate Mg(2+): Asp-210 and Asn-212. Catalysis depends on Asp-210, which acts as the Proton donor/acceptor. Thr-233 carries the post-translational modification Phosphothreonine; by CDK5. Residues 289–318 (QSVLPALCDSKIRSKALGSDHCPITLYLAL) are mitochondrial targeting sequence (MTS). Mg(2+) is bound at residue Asp-308. Cys-310 is modified (S-nitrosocysteine).

It belongs to the DNA repair enzymes AP/ExoA family. As to quaternary structure, monomer. Homodimer; disulfide-linked. Component of the SET complex, composed of at least APEX1, SET, ANP32A, HMGB2, NME1 and TREX1. Associates with the dimer XRCC5/XRCC6 in a DNA-dependent manner. Interacts with SIRT1; the interaction is increased in the context of genotoxic stress. Interacts with HDAC1, HDAC2 and HDAC3; the interactions are not dependent on the APEX1 acetylation status. Interacts with XRCC1; the interaction is induced by SIRT1 and increased with the APEX1 acetylated form. Interacts with NPM1 (via N-terminal domain); the interaction is RNA-dependent and decreases in hydrogen peroxide-damaged cells. Interacts (via N-terminus) with YBX1 (via C-terminus); the interaction is increased in presence of APEX1 acetylated at Lys-6 and Lys-7. Interacts with HNRNPL; the interaction is DNA-dependent. Interacts (via N-terminus) with KPNA1 and KPNA2. Interacts with TXN; the interaction stimulates the FOS/JUN AP-1 complex DNA-binding activity in a redox-dependent manner. Interacts with GZMA, KRT8, MDM2, POLB, PRDX6, PRPF19, RPLP0, TOMM20 and WDR77. Binds to CDK5. Mg(2+) serves as cofactor. It depends on Mn(2+) as a cofactor. Post-translationally, phosphorylated. Phosphorylation by kinase PKC or casein kinase CK2 results in enhanced redox activity that stimulates binding of the FOS/JUN AP-1 complex to its cognate binding site. AP-endodeoxyribonuclease activity is not affected by CK2-mediated phosphorylation. Phosphorylation of Thr-233 by CDK5 in response to MPP(+)/MPTP (1-methyl-4-phenylpyridinium) reduces AP-endodeoxyribonuclease activity resulting in accumulation of DNA damage and contributing to neuronal death. In terms of processing, acetylated on Lys-6 and Lys-7. Acetylation is increased by the transcriptional coactivator EP300 acetyltransferase, genotoxic agents like H(2)O(2) and methyl methanesulfonate (MMS). Acetylation increases its binding affinity to the negative calcium response element (nCaRE) DNA promoter. The acetylated form induces a stronger binding of YBX1 to the Y-box sequence in the MDR1 promoter than the unacetylated form. Deacetylated on lysines. Lys-6 and Lys-7 are deacetylated by SIRT1. Cleaved at Lys-31 by granzyme A to create the mitochondrial form; leading in reduction of binding to DNA, AP endodeoxyribonuclease activity, redox activation of transcription factors and to enhanced cell death. Cleaved by granzyme K; leading to intracellular ROS accumulation and enhanced cell death after oxidative stress. Post-translationally, cys-69 and Cys-93 are nitrosylated in response to nitric oxide (NO) and lead to the exposure of the nuclear export signal (NES). In terms of processing, ubiquitinated by MDM2; leading to translocation to the cytoplasm and proteasomal degradation. In terms of tissue distribution, the mitochondrial form is expressed in liver (at protein level). Thymus.

It is found in the nucleus. The protein resides in the nucleolus. Its subcellular location is the nucleus speckle. It localises to the endoplasmic reticulum. The protein localises to the cytoplasm. It is found in the mitochondrion. The catalysed reaction is Exonucleolytic cleavage in the 3'- to 5'-direction to yield nucleoside 5'-phosphates.. With respect to regulation, NPM1 stimulates endodeoxyribonuclease activity on double-stranded DNA with AP sites, but inhibits endoribonuclease activity on single-stranded RNA containing AP sites. Functionally, multifunctional protein that plays a central role in the cellular response to oxidative stress. The two major activities of APEX1 are DNA repair and redox regulation of transcriptional factors. Functions as an apurinic/apyrimidinic (AP) endodeoxyribonuclease in the DNA base excision repair (BER) pathway of DNA lesions induced by oxidative and alkylating agents. Initiates repair of AP sites in DNA by catalyzing hydrolytic incision of the phosphodiester backbone immediately adjacent to the damage, generating a single-strand break with 5'-deoxyribose phosphate and 3'-hydroxyl ends. Also incises at AP sites in the DNA strand of DNA/RNA hybrids, single-stranded DNA regions of R-loop structures, and single-stranded RNA molecules. Has 3'-5' exoribonuclease activity on mismatched deoxyribonucleotides at the 3' termini of nicked or gapped DNA molecules during short-patch BER. Possesses DNA 3' phosphodiesterase activity capable of removing lesions (such as phosphoglycolate) blocking the 3' side of DNA strand breaks. May also play a role in the epigenetic regulation of gene expression by participating in DNA demethylation. Acts as a loading factor for POLB onto non-incised AP sites in DNA and stimulates the 5'-terminal deoxyribose 5'-phosphate (dRp) excision activity of POLB. Plays a role in the protection from granzyme-mediated cellular repair leading to cell death. Also involved in the DNA cleavage step of class switch recombination (CSR). On the other hand, APEX1 also exerts reversible nuclear redox activity to regulate DNA binding affinity and transcriptional activity of transcriptional factors by controlling the redox status of their DNA-binding domain, such as the FOS/JUN AP-1 complex after exposure to IR. Involved in calcium-dependent down-regulation of parathyroid hormone (PTH) expression by binding to negative calcium response elements (nCaREs). Together with HNRNPL or the dimer XRCC5/XRCC6, associates with nCaRE, acting as an activator of transcriptional repression. Stimulates the YBX1-mediated MDR1 promoter activity, when acetylated at Lys-6 and Lys-7, leading to drug resistance. Also acts as an endoribonuclease involved in the control of single-stranded RNA metabolism. Plays a role in regulating MYC mRNA turnover by preferentially cleaving in between UA and CA dinucleotides of the MYC coding region determinant (CRD). In association with NMD1, plays a role in the rRNA quality control process during cell cycle progression. Associates, together with YBX1, on the MDR1 promoter. Together with NPM1, associates with rRNA. Binds DNA and RNA. The chain is DNA repair nuclease/redox regulator APEX1 (APEX1) from Bos taurus (Bovine).